Reading from the N-terminus, the 297-residue chain is Probable GTP 3',8-cyclase (297 aa).

The Radical SAM core domain occupies 4–220; the sequence is EFGREIRSFR…VVTRKFMQNR (217 aa). GTP is bound at residue Arg13. [4Fe-4S] cluster is bound by residues Cys20 and Cys24. Position 26 (Tyr26) interacts with S-adenosyl-L-methionine. Position 27 (Cys27) interacts with [4Fe-4S] cluster. Lys61 lines the GTP pocket. Gly65 is an S-adenosyl-L-methionine binding site. Thr91 is a GTP binding site. Ser115 contacts S-adenosyl-L-methionine. Lys151 is a GTP binding site. Residues Cys242 and Cys245 each contribute to the [4Fe-4S] cluster site. 247 to 249 is a binding site for GTP; sequence RIR. Position 259 (Cys259) interacts with [4Fe-4S] cluster.

Belongs to the radical SAM superfamily. MoaA family. The cofactor is [4Fe-4S] cluster.

The catalysed reaction is GTP + AH2 + S-adenosyl-L-methionine = (8S)-3',8-cyclo-7,8-dihydroguanosine 5'-triphosphate + 5'-deoxyadenosine + L-methionine + A + H(+). Its pathway is cofactor biosynthesis; molybdopterin biosynthesis. Catalyzes the cyclization of GTP to (8S)-3',8-cyclo-7,8-dihydroguanosine 5'-triphosphate. This chain is Probable GTP 3',8-cyclase, found in Methanococcus vannielii (strain ATCC 35089 / DSM 1224 / JCM 13029 / OCM 148 / SB).